Reading from the N-terminus, the 139-residue chain is Plastocyanin (139 aa).

The first 34 residues, 1-34 (MKLIAASLRRLSLAVLTVLLVVSSFAVFTPSAAA), serve as a signal peptide directing secretion. Positions 35–135 (ETYTVKLGSD…HRGAGMVGKI (101 aa)) constitute a Plastocyanin-like domain. Cu cation contacts are provided by His73, Cys123, His126, and Met131.

The protein belongs to the plastocyanin family. The cofactor is Cu(2+).

It is found in the cellular thylakoid membrane. Functionally, participates in electron transfer between P700 and the cytochrome b6-f complex in photosystem I. In Trichormus variabilis (strain ATCC 29413 / PCC 7937) (Anabaena variabilis), this protein is Plastocyanin (petE).